The primary structure comprises 400 residues: Large envelope protein (400 aa).

Methionine 1 carries the post-translational modification N-acetylmethionine. The N-myristoyl glycine; by host moiety is linked to residue glycine 2. Positions 2 to 119 (GGRLPKPRKG…PPLRDSHPQA (118 aa)) are pre-S1. The tract at residues 2–174 (GGRLPKPRKG…SSRIGDPAPT (173 aa)) is pre-S. The Virion surface; in external conformation segment spans residues 2–181 (GGRLPKPRKG…APTMENITSG (180 aa)). Residues 2–253 (GGRLPKPRKG…PGYRWMCLRR (252 aa)) lie on the Intravirion; in internal conformation side of the membrane. Arginine 4 is a glycosylation site (N-linked (GlcNAc...) asparagine). Residues 84 to 116 (TLTTVPAVPPPASTNRQSGRQPTPISPPLRDSH) form a disordered region. Residues 96-106 (STNRQSGRQPT) show a composition bias toward polar residues. Residues 120-174 (MQWNSTKFHQTLQDPRVRGLYFPAGGSSSGTVNPAPNIASHISSISSRIGDPAPT) form a pre-S2 region. A helical membrane pass occupies residues 182-202 (FLGPLLVLQAGFFLLTRILTI). Residues 203-253 (PQSLDSWWTSLNFLGEAPVCLGQNSQSPTSNHSPTSCPPICPGYRWMCLRR) are Intravirion; in external conformation-facing. The helical transmembrane segment at 254 to 274 (FIIFLFILLLCLIFLLVLLDC) threads the bilayer. Residues 275–348 (QGMLPVCPLI…WASVRFSWLS (74 aa)) are Virion surface-facing. Asparagine 320 carries N-linked (GlcNAc...) asparagine; by host glycosylation. A helical transmembrane segment spans residues 349–369 (LLVPFVQWFVGLSPTVWLSVI). At 370 to 375 (WMMWYW) the chain is on the intravirion side. A helical membrane pass occupies residues 376-398 (GPSLYNILSPFIPLLPIFFCLWV). At 399–400 (YI) the chain is on the virion surface side.

The protein belongs to the orthohepadnavirus major surface antigen family. In its internal form (Li-HBsAg), interacts with the capsid protein and with the isoform S. Interacts with host chaperone CANX. In terms of assembly, associates with host chaperone CANX through its pre-S2 N glycan; this association may be essential for isoform M proper secretion. As to quaternary structure, interacts with isoform L. Interacts with the antigens of satellite virus HDV (HDVAgs); this interaction is required for encapsidation of HDV genomic RNA. Post-translationally, isoform M is N-terminally acetylated by host at a ratio of 90%, and N-glycosylated by host at the pre-S2 region. Myristoylated.

It is found in the virion membrane. Its function is as follows. The large envelope protein exists in two topological conformations, one which is termed 'external' or Le-HBsAg and the other 'internal' or Li-HBsAg. In its external conformation the protein attaches the virus to cell receptors and thereby initiating infection. This interaction determines the species specificity and liver tropism. This attachment induces virion internalization predominantly through caveolin-mediated endocytosis. The large envelope protein also assures fusion between virion membrane and endosomal membrane. In its internal conformation the protein plays a role in virion morphogenesis and mediates the contact with the nucleocapsid like a matrix protein. Functionally, the middle envelope protein plays an important role in the budding of the virion. It is involved in the induction of budding in a nucleocapsid independent way. In this process the majority of envelope proteins bud to form subviral lipoprotein particles of 22 nm of diameter that do not contain a nucleocapsid. The sequence is that of Large envelope protein from Hepatitis B virus genotype A3 (isolate Cameroon/CMR711/1994) (HBV-A).